The chain runs to 87 residues: Citrate lyase acyl carrier protein (87 aa).

Position 14 is an O-(phosphoribosyl dephospho-coenzyme A)serine (Ser-14).

It belongs to the CitD family. Oligomer with a subunit composition of (alpha,beta,gamma)6.

The protein localises to the cytoplasm. Its function is as follows. Covalent carrier of the coenzyme of citrate lyase. This chain is Citrate lyase acyl carrier protein, found in Treponema denticola (strain ATCC 35405 / DSM 14222 / CIP 103919 / JCM 8153 / KCTC 15104).